The sequence spans 686 residues: Phosphatidylinositol 4,5-bisphosphate-binding protein SLM1 (686 aa).

Residues 33-147 (RSMTSADHAN…KQLQGKNSLT (115 aa)) form a disordered region. Residues 45 to 63 (QQQQQQQQQQQQQQQQQQQ) show a composition bias toward low complexity. The span at 64-126 (SASFQNGSLT…PNIDSNTNVT (63 aa)) shows a compositional bias: polar residues. A compositionally biased stretch (low complexity) spans 133 to 144 (NNNNGKQLQGKN). Residues Ser145, Ser150, and Ser153 each carry the phosphoserine modification. Positions 157-172 (SSLQRQRLAQQQQQQQ) are enriched in low complexity. A disordered region spans residues 157–176 (SSLQRQRLAQQQQQQQDPRS). Residues 296–381 (RLEDLRRDLI…FLHEAFDNLE (86 aa)) are a coiled coil. Positions 468–581 (YEIKSGFLER…WFDNLKILTS (114 aa)) constitute a PH domain. Residues 626-669 (VENDENDDINSNYVGSTVTPKLDNQTNTNTSMSSLPDTNDSELQ) form a disordered region. Residues 634 to 663 (INSNYVGSTVTPKLDNQTNTNTSMSSLPDT) are compositionally biased toward polar residues. Positions 673–678 (PNIYIQ) match the PXIXIT-like, required for interaction with CNA1 and CNA2, and calcineurin-dependent dephosphorylation motif.

As to quaternary structure, heterodimer of SLM1-SLM2. Binds phosphatidylinositol 4,5-bisphosphate, which is required for function. Interacts with the TORC2 subunits AVO2, BIT61 and TOR2. Interacts with the calcineurin catalytic subunits CNA1 and CNA2. Phosphorylated by the target of rapamycin complex 2 (TORC2) and dephosphorylated by serine/threonine-protein phosphatase 2B (calcineurin). Dephosphorylated in response to the disruption or inhibition of sphingolipid synthesis.

It localises to the cell membrane. Together with SLM2, acts as an effector of the TORC2- and calcineurin-signaling pathways. Phosphorylated and activated by TORC2 under favorable growth conditions. Mediates actin polarization via inhibition of calcineurin-dependent transcription. Upon nutrient limitation or environmental stress, gets dephosphorylated by calcineurin. Dephosphorylation inhibits its interaction with TORC2, thereby antagonizing TORC2 signaling and mediating calcineurin-dependent actin depolarization. May play a role in the response to the disruption of sphingolipid synthesis, where dephosphorylation of SLM1 leads to the activation and phosphorylation of YPK1 through the TORC2 and PKH1 pathways, which in turn phosphorylates ORM1 and LAG1 to activate sphingolipid synthesis. Also functions in heat-induced, calcineurin-mediated uracil permease (FUR4) endocytosis. In Saccharomyces cerevisiae (strain ATCC 204508 / S288c) (Baker's yeast), this protein is Phosphatidylinositol 4,5-bisphosphate-binding protein SLM1 (SLM1).